The chain runs to 346 residues: 3 beta-hydroxysteroid dehydrogenase/Delta 5--&gt;4-isomerase (346 aa).

The Proton acceptor role is filled by Tyr147. Lys151 is an NAD(+) binding site.

It belongs to the 3-beta-HSD family.

The enzyme catalyses a 3beta-hydroxy-Delta(5)-steroid + NAD(+) = a 3-oxo-Delta(5)-steroid + NADH + H(+). The catalysed reaction is a 3-oxo-Delta(5)-steroid = a 3-oxo-Delta(4)-steroid. It participates in lipid metabolism; steroid biosynthesis. Catalyzes the oxidative conversion of Delta(5)-ene-3-beta-hydroxy steroid, and the oxidative conversion of ketosteroids. The 3-beta-HSD enzymatic system plays a crucial role in the biosynthesis of all classes of hormonal steroids. During viral infection, steroid production contributes to virulence by inhibiting the host inflammatory response. In Homo sapiens (Human), this protein is 3 beta-hydroxysteroid dehydrogenase/Delta 5--&gt;4-isomerase (OPG174).